We begin with the raw amino-acid sequence, 159 residues long: NADH-quinone oxidoreductase subunit B (159 aa).

[4Fe-4S] cluster-binding residues include Cys-32, Cys-33, Cys-97, and Cys-126.

This sequence belongs to the complex I 20 kDa subunit family. In terms of assembly, NDH-1 is composed of 14 different subunits. Subunits NuoB, C, D, E, F, and G constitute the peripheral sector of the complex. [4Fe-4S] cluster is required as a cofactor.

The protein resides in the cell inner membrane. The enzyme catalyses a quinone + NADH + 5 H(+)(in) = a quinol + NAD(+) + 4 H(+)(out). In terms of biological role, NDH-1 shuttles electrons from NADH, via FMN and iron-sulfur (Fe-S) centers, to quinones in the respiratory chain. The immediate electron acceptor for the enzyme in this species is believed to be ubiquinone. Couples the redox reaction to proton translocation (for every two electrons transferred, four hydrogen ions are translocated across the cytoplasmic membrane), and thus conserves the redox energy in a proton gradient. This Helicobacter pylori (strain P12) protein is NADH-quinone oxidoreductase subunit B.